The chain runs to 370 residues: Calcium-binding protein 1 (370 aa).

A disordered region spans residues 1–198; it reads MGGGDGAAFK…GRGDSVPAAA (198 aa). Gly-2 carries N-myristoyl glycine lipidation. Gly-4 carries the S-palmitoyl cysteine lipid modification. 3 stretches are compositionally biased toward low complexity: residues 50-61, 68-84, and 148-157; these read HASAGPAAMSSH, KTSL…GGSR, and ALPAAASRPS. 4 EF-hand domains span residues 225–260, 279–296, 302–337, and 339–370; these read EEIE…MGYM, GHVD…KLLA, IGVK…LLGH, and VGHR…MMSR. 5 residues coordinate Ca(2+): Asp-238, Asp-240, Asp-242, Tyr-244, and Asp-249. Mg(2+) contacts are provided by Asp-238, Asp-240, Asp-242, and Tyr-244. The Ca(2+) site is built by Asp-315, Asn-317, Asp-319, and Glu-321. Ser-323 is modified (phosphoserine). Glu-326, Asp-352, Leu-353, Asn-354, Asp-356, Gly-357, Arg-358, Asp-360, and Glu-363 together coordinate Ca(2+).

As to quaternary structure, homodimer; when bound to calcium or magnesium. Interacts (via C-terminus) with ITPR1, ITPR2 and ITPR3. This binding is calcium dependent and the interaction correlates with calcium concentration. An additional calcium-independent interaction with the N-terminus of ITPR1 results in a decreased InsP(3) binding to the receptor. Interacts with CACNA1A (via C-terminal CDB motif) in the pre- and postsynaptic membranes. Interacts with CACNA1C (via C-terminal C and IQ motifs). The binding to the C motif is calcium independent whereas the binding to IQ requires the presence of calcium and is mutually exclusive with calmodulin binding. Interacts with CACNA1D. Interacts with TRPC5 (via C-terminus). Interacts (via EF-hands 1 and 2) at microtubules with MAP1LC3B. Interacts with MYO1C. Interacts (via EF-hands 1 and 2) with NSMF (via the central NLS-containing motif region), the interaction occurs in a calcium dependent manner after synaptic NMDA receptor stimulation and prevents nuclear import of NSMF. Interacts with SPACA9. In terms of processing, phosphorylated. The phosphorylation regulates the activity. As to expression, retina and brain. Somatodendritic compartment of neurons. Calbrain was found exclusively in brain where it is abundant in the hippocampus, habenular area in the epithalamus and in the cerebellum.

It localises to the cytoplasm. The protein resides in the cytoskeleton. It is found in the perinuclear region. Its subcellular location is the cell membrane. The protein localises to the golgi apparatus. It localises to the postsynaptic density. The protein resides in the cell cortex. In terms of biological role, modulates calcium-dependent activity of inositol 1,4,5-triphosphate receptors (ITPRs). Inhibits agonist-induced intracellular calcium signaling. Enhances inactivation and does not support calcium-dependent facilitation of voltage-dependent P/Q-type calcium channels. Causes calcium-dependent facilitation and inhibits inactivation of L-type calcium channels by binding to the same sites as calmodulin in the C-terminal domain of CACNA1C, but has an opposite effect on channel function. Suppresses the calcium-dependent inactivation of CACNA1D. Inhibits TRPC5 channels. Prevents NMDA receptor-induced cellular degeneration. Required for the normal transfer of light signals through the retina. The protein is Calcium-binding protein 1 (CABP1) of Homo sapiens (Human).